The sequence spans 129 residues: Aspartate 1-decarboxylase (129 aa).

S25 (schiff-base intermediate with substrate; via pyruvic acid) is an active-site residue. S25 carries the pyruvic acid (Ser) modification. T57 contacts substrate. Residue Y58 is the Proton donor of the active site. 73–75 (GAA) provides a ligand contact to substrate.

It belongs to the PanD family. Heterooctamer of four alpha and four beta subunits. The cofactor is pyruvate. Post-translationally, is synthesized initially as an inactive proenzyme, which is activated by self-cleavage at a specific serine bond to produce a beta-subunit with a hydroxyl group at its C-terminus and an alpha-subunit with a pyruvoyl group at its N-terminus.

It localises to the cytoplasm. The catalysed reaction is L-aspartate + H(+) = beta-alanine + CO2. It participates in cofactor biosynthesis; (R)-pantothenate biosynthesis; beta-alanine from L-aspartate: step 1/1. Catalyzes the pyruvoyl-dependent decarboxylation of aspartate to produce beta-alanine. The chain is Aspartate 1-decarboxylase from Chlorobium chlorochromatii (strain CaD3).